The primary structure comprises 433 residues: Enolase (433 aa).

Gln163 contacts (2R)-2-phosphoglycerate. Glu205 acts as the Proton donor in catalysis. Positions 242, 285, and 312 each coordinate Mg(2+). 4 residues coordinate (2R)-2-phosphoglycerate: Lys337, Arg366, Ser367, and Lys388. Residue Lys337 is the Proton acceptor of the active site.

This sequence belongs to the enolase family. Mg(2+) is required as a cofactor.

It localises to the cytoplasm. It is found in the secreted. Its subcellular location is the cell surface. The catalysed reaction is (2R)-2-phosphoglycerate = phosphoenolpyruvate + H2O. The protein operates within carbohydrate degradation; glycolysis; pyruvate from D-glyceraldehyde 3-phosphate: step 4/5. Its function is as follows. Catalyzes the reversible conversion of 2-phosphoglycerate (2-PG) into phosphoenolpyruvate (PEP). It is essential for the degradation of carbohydrates via glycolysis. The sequence is that of Enolase from Lawsonia intracellularis (strain PHE/MN1-00).